We begin with the raw amino-acid sequence, 199 residues long: HTH-type transcriptional regulator BetI (199 aa).

The 61-residue stretch at 8 to 68 (EIRKPQLVKA…ETMREILRQL (61 aa)) folds into the HTH tetR-type domain. Residues 31–50 (SISLISKEAGVSTGIINHYF) constitute a DNA-binding region (H-T-H motif).

The protein operates within amine and polyamine biosynthesis; betaine biosynthesis via choline pathway [regulation]. Functionally, repressor involved in the biosynthesis of the osmoprotectant glycine betaine. It represses transcription of the choline transporter BetT and the genes of BetAB involved in the synthesis of glycine betaine. This Vibrio campbellii (strain ATCC BAA-1116) protein is HTH-type transcriptional regulator BetI.